The chain runs to 459 residues: 5-hydroxytryptamine receptor 2C (459 aa).

The first 32 residues, 1–32, serve as a signal peptide directing secretion; the sequence is MVNLGTAVRSLLVHLIGLLVWQFDISISPVAA. Over 33–56 the chain is Extracellular; the sequence is IVTDTFNSSDGGRLFQFPDGVQNW. Residues 57-81 form a helical membrane-spanning segment; sequence PALSIVVIIIMTIGGNILVIMAVSM. Residues 82–87 lie on the Cytoplasmic side of the membrane; it reads EKKLHN. Residues 88–112 form a helical membrane-spanning segment; the sequence is ATNYFLMSLAIADMLVGLLVMPLSL. Over 113-129 the chain is Extracellular; sequence LAILYDYVWPLPRYLCP. C128 and C208 are joined by a disulfide. A helical transmembrane segment spans residues 130-152; that stretch reads VWISLDVLFSTASIMHLCAISLD. T140 contributes to the ergotamine binding site. A DRY motif; important for ligand-induced conformation changes motif is present at residues 152-154; the sequence is DRY. The Cytoplasmic portion of the chain corresponds to 153–168; it reads RYVAIRNPIEHSRFNS. A helical membrane pass occupies residues 169-190; that stretch reads RTKAIMKIAIVWAISIGVSVPI. Residues 191–214 lie on the Extracellular side of the membrane; that stretch reads PVIGLRDESKVFVNNTTCVLNDPN. N204 and N205 each carry an N-linked (GlcNAc...) asparagine glycan. L210 lines the ergotamine pocket. The helical transmembrane segment at 215 to 237 threads the bilayer; it reads FVLIGSFVAFFIPLTIMVITYFL. Residues 238 to 312 lie on the Cytoplasmic side of the membrane; the sequence is TIYVLRRQTL…AINNEKKASK (75 aa). Residues 274 to 302 form a disordered region; it reads DEEENAPNPNPDQKPRRKKKEKRPRGTMQ. Over residues 288–298 the composition is skewed to basic residues; sequence PRRKKKEKRPR. Residues 313–337 form a helical membrane-spanning segment; that stretch reads VLGIVFFVFLIMWCPFFITNILSVL. C338 and C342 form a disulfide bridge. At 338–348 the chain is on the extracellular side; sequence CGKACNQKLME. The chain crosses the membrane as a helical span at residues 349-371; the sequence is KLLNVFVWIGYVCSGINPLVYTL. Residues 365–369 carry the NPxxY motif; important for ligand-induced conformation changes and signaling motif; it reads NPLVY. At 372 to 459 the chain is on the cytoplasmic side; that stretch reads FNKIYRRAFS…NVVSERISSV (88 aa). Positions 457-459 match the PDZ-binding motif; that stretch reads SSV.

Belongs to the G-protein coupled receptor 1 family. As to quaternary structure, interacts with MPDZ. Interacts with ARRB2. Interacts with MPP3; this interaction stabilizes the receptor at the plasma membrane and prevents the desensitization of the HTR2C receptor-mediated calcium response. As to expression, detected in brain cortex, hypothalamus, brainstem and arcuate nucleus. Detected in the paraventricular nucleus of the hypothalamus.

The protein localises to the cell membrane. Functionally, G-protein coupled receptor for 5-hydroxytryptamine (serotonin). Also functions as a receptor for various drugs and psychoactive substances, including ergot alkaloid derivatives, 1-2,5,-dimethoxy-4-iodophenyl-2-aminopropane (DOI) and lysergic acid diethylamide (LSD). Ligand binding causes a conformation change that triggers signaling via guanine nucleotide-binding proteins (G proteins) and modulates the activity of downstream effectors. HTR2C is coupled to G(q)/G(11) G alpha proteins and activates phospholipase C-beta, releasing diacylglycerol (DAG) and inositol 1,4,5-trisphosphate (IP3) second messengers that modulate the activity of phosphatidylinositol 3-kinase and promote the release of Ca(2+) ions from intracellular stores, respectively. Beta-arrestin family members inhibit signaling via G proteins and mediate activation of alternative signaling pathways. Regulates neuronal activity via the activation of short transient receptor potential calcium channels in the brain, and thereby modulates the activation of pro-opiomelanocortin neurons and the release of CRH that then regulates the release of corticosterone. Plays a role in the regulation of appetite and eating behavior, responses to anxiogenic stimuli and stress. Plays a role in insulin sensitivity and glucose homeostasis. The polypeptide is 5-hydroxytryptamine receptor 2C (Mus musculus (Mouse)).